Consider the following 252-residue polypeptide: Putative peptide zinc metalloprotease protein YydH (252 aa).

2 helical membrane passes run 56-76 (FFYL…IHLI) and 85-105 (VFYG…NIVL). His-106 is a Zn(2+) binding site. Glu-107 is a catalytic residue. His-110 lines the Zn(2+) pocket. Transmembrane regions (helical) follow at residues 152 to 172 (IIVH…LELI), 181 to 201 (ALTM…IPIL), and 231 to 251 (IQII…LYIV).

The protein belongs to the peptidase M50B family. The cofactor is Zn(2+).

It is found in the cell membrane. Its function is as follows. Required for production of the modified peptide YydF. May process the precursor form of YydF to release the active peptide (Potential). The sequence is that of Putative peptide zinc metalloprotease protein YydH (yydH) from Bacillus subtilis (strain 168).